The primary structure comprises 78 residues: Pro-glucagon (78 aa).

This sequence belongs to the glucagon family.

The protein localises to the secreted. Plays a key role in glucose metabolism and homeostasis. Regulates blood glucose by increasing gluconeogenesis and decreasing glycolysis. The polypeptide is Pro-glucagon (gcg) (Atractosteus spatula (Alligator gar)).